A 66-amino-acid chain; its full sequence is Ribosome biogenesis protein Nop10 (66 aa).

The protein belongs to the NOP10 family.

Involved in ribosome biogenesis; more specifically in 18S rRNA pseudouridylation and in cleavage of pre-rRNA. The polypeptide is Ribosome biogenesis protein Nop10 (Staphylothermus marinus (strain ATCC 43588 / DSM 3639 / JCM 9404 / F1)).